The following is a 286-amino-acid chain: Spermidine/putrescine transport system permease protein PotB (286 aa).

Residues 1 to 13 lie on the Cytoplasmic side of the membrane; it reads MKIINNKFQKITV. A helical membrane pass occupies residues 14–33; the sequence is AIIFSWLIFFVLIPNLLVLA. Topologically, residues 34–71 are periplasmic; sequence VSFLTRDGSNFYAFPITIENYTNLFNPLYAQVVWNSLS. In terms of domain architecture, ABC transmembrane type-1 spans 66–274; that stretch reads VWNSLSMSGI…MALLIFVYYR (209 aa). Residues 72–91 form a helical membrane-spanning segment; that stretch reads MSGIATIICLLIGYPFAFMM. Topologically, residues 92-100 are cytoplasmic; it reads SKIHPKYRP. The chain crosses the membrane as a helical span at residues 101 to 120; it reads LLLFLVVLPFWTNSLIRIYG. Residues 121-151 lie on the Periplasmic side of the membrane; the sequence is MKVFLGVKGILNTMLIDMGILSAPIRILNTE. Residues 152-171 traverse the membrane as a helical segment; it reads IAVIIGLVYLLLPFMILPLY. The Cytoplasmic segment spans residues 172–199; the sequence is SAIEKLDNRLLEAARDLGANTFQRFFRV. The chain crosses the membrane as a helical span at residues 200–219; the sequence is ILPLTMPGIIAGCLLVLLPA. Over 220–252 the chain is Periplasmic; that stretch reads MGMFYVADLLGGAKVLLVGNVIKSEFLISRNWP. The helical transmembrane segment at 253–272 threads the bilayer; the sequence is FGSAVSIGLTVLMALLIFVY. Residues 273 to 286 are Cytoplasmic-facing; that stretch reads YRANKLLNRKVELE.

It belongs to the binding-protein-dependent transport system permease family. CysTW subfamily.

It is found in the cell inner membrane. In terms of biological role, required for the activity of the bacterial periplasmic transport system of putrescine and spermidine. This chain is Spermidine/putrescine transport system permease protein PotB (potB), found in Haemophilus influenzae (strain ATCC 51907 / DSM 11121 / KW20 / Rd).